Consider the following 503-residue polypeptide: Aspartyl/glutamyl-tRNA(Asn/Gln) amidotransferase subunit B (503 aa).

Belongs to the GatB/GatE family. GatB subfamily. As to quaternary structure, heterotrimer of A, B and C subunits.

The catalysed reaction is L-glutamyl-tRNA(Gln) + L-glutamine + ATP + H2O = L-glutaminyl-tRNA(Gln) + L-glutamate + ADP + phosphate + H(+). The enzyme catalyses L-aspartyl-tRNA(Asn) + L-glutamine + ATP + H2O = L-asparaginyl-tRNA(Asn) + L-glutamate + ADP + phosphate + 2 H(+). Allows the formation of correctly charged Asn-tRNA(Asn) or Gln-tRNA(Gln) through the transamidation of misacylated Asp-tRNA(Asn) or Glu-tRNA(Gln) in organisms which lack either or both of asparaginyl-tRNA or glutaminyl-tRNA synthetases. The reaction takes place in the presence of glutamine and ATP through an activated phospho-Asp-tRNA(Asn) or phospho-Glu-tRNA(Gln). The sequence is that of Aspartyl/glutamyl-tRNA(Asn/Gln) amidotransferase subunit B from Cereibacter sphaeroides (strain ATCC 17025 / ATH 2.4.3) (Rhodobacter sphaeroides).